We begin with the raw amino-acid sequence, 512 residues long: MARTKATARKTVPAQQEAHGYEFGGPIGASLISFGLPIACYAFGFLCNDVSGCPPPSLLSPSKLFTPPTLSNKVPWQHALDTLAAEVGWPGWSGLINTEAVLGVFFWYGLSLLLWVLLPAHEVEGTELRTGGRLKYRFNACLSAVTIFVACAAGTIVRGPDFQVWTFINRNYIQLLTVNIIIAYALAIYVYLKSFEVKAGNTEQRELAAGGHSGHILYDWYMGRELNPRITIPFIGEVDIKSFMELRPGMIGWVLLDLAFAAKQYKSYGYITDSMRKWTPLLLGIHVLTIHPVIVIISQSVYVFDALYMEPAILTTMDLTTDGFGFMLSFGDLVWVPFIYSIQAKYLSVHPVALGPLYVALILTIQATGYYIFRATNNDKNIFRTNPNDPKVAHLKYIETGTGSRLLTTGWWGTARHINYLGDWLMSWSYCLPTLAAGYKLTPTILFENSRLVSTDGMKGAGIPITYFYMLYFAILLIHRERRDEAKCRRKYGAHWEKYCQIVRWRILPGVY.

Helical transmembrane passes span 27–47 (IGAS…GFLC), 100–120 (AVLG…LLPA), 140–160 (ACLS…VRGP), 172–192 (YIQL…YVYL), 242–262 (SFME…AFAA), 278–298 (WTPL…VIIS), 324–344 (FGFM…SIQA), and 353–373 (ALGP…YYIF). NADP(+)-binding positions include K380, R384, L407, W412, and 419–420 (NY). 2 helical membrane passes run 418-438 (INYL…LAAG) and 458-478 (MKGA…ILLI). Residues D484, 488-492 (CRRKY), and Y499 each bind NADP(+).

Belongs to the ERG4/ERG24 family.

The protein resides in the membrane. The enzyme catalyses 4,4-dimethyl-5alpha-cholesta-8,24-dien-3beta-ol + NADP(+) = 4,4-dimethyl-5alpha-cholesta-8,14,24-trien-3beta-ol + NADPH + H(+). The protein operates within steroid biosynthesis; zymosterol biosynthesis; zymosterol from lanosterol: step 2/6. Functionally, reduces the C14=C15 double bond of 4,4-dimethyl-cholesta-8,14,24-trienol to produce 4,4-dimethyl-cholesta-8,24-dienol. This chain is Delta(14)-sterol reductase (ERG3), found in Septoria lycopersici (Tomato leaf spot fungus).